We begin with the raw amino-acid sequence, 54 residues long: Small ribosomal subunit protein uS14 (54 aa).

Positions 19, 22, 37, and 40 each coordinate Zn(2+).

Belongs to the universal ribosomal protein uS14 family. Zinc-binding uS14 subfamily. Part of the 30S ribosomal subunit. The cofactor is Zn(2+).

Binds 16S rRNA, required for the assembly of 30S particles. The polypeptide is Small ribosomal subunit protein uS14 (Sulfolobus acidocaldarius (strain ATCC 33909 / DSM 639 / JCM 8929 / NBRC 15157 / NCIMB 11770)).